Here is an 877-residue protein sequence, read N- to C-terminus: Potassium transporter 23 (877 aa).

2 disordered regions span residues 1-60 (MDDD…SLDG) and 72-92 (ASAGGASGGGGGGGPLSRASS). Topologically, residues 1–126 (MDDDDSGIQE…RGAHGHSSKE (126 aa)) are cytoplasmic. Pro residues predominate over residues 12–28 (PAPPPPPPPPPPPPPPL). Gly residues predominate over residues 76-86 (GASGGGGGGGP). The helical transmembrane segment at 127–147 (ISMLSTVAMAFQTLGVVYGDM) threads the bilayer. The Extracellular segment spans residues 148–173 (GTSPLYVFSDVFSKVPIKSEVEILGA). The helical transmembrane segment at 174–194 (LSLVMYTIALIPFAKYVFIVL) threads the bilayer. Residues 195 to 260 (KANDNGEGGT…SLEKNPVFKN (66 aa)) lie on the Cytoplasmic side of the membrane. The helical transmembrane segment at 261-281 (ILLFLVLMGTSMVIGDGILTP) threads the bilayer. Over 282–295 (SMSVMSAVSGLQGR) the chain is Extracellular. A helical membrane pass occupies residues 296-316 (VPGFGTDAVVIVSILFLVLLF). Topologically, residues 317–325 (SVQRFGTGK) are cytoplasmic. The helical transmembrane segment at 326-346 (VGFMFAPILALWFINLGTIGI) threads the bilayer. Topologically, residues 347 to 379 (YNLAKYDISVVRAFNPVYIYLFFQTNGIKAWSA) are extracellular. Residues 380-400 (LGGCVLCITGAEAMFADLGHF) form a helical membrane-spanning segment. The Cytoplasmic segment spans residues 401 to 406 (SVKSIQ). The chain crosses the membrane as a helical span at residues 407-427 (VAFTAVVFPCLLIAYMGQAAY). The Extracellular segment spans residues 428 to 441 (LMKYPFAVERIFYD). The helical transmembrane segment at 442–462 (SVPEILFWPVFVIATLAAMIA) threads the bilayer. Residues 463–498 (SQAMISATFSCIKQAMALGCFPRIKIIHTSKKVMGQ) are Cytoplasmic-facing. A helical membrane pass occupies residues 499 to 519 (IYIPVMNWFLMVMCIIIVATF). Over 520-524 (RSTND) the chain is Extracellular. A helical transmembrane segment spans residues 525 to 545 (IANAYGIAEVGVMMVSTALVT). Residues 546–555 (LVMLLIWQTN) lie on the Cytoplasmic side of the membrane. Residues 556–578 (LFLVMCFPVIFGSVEFVYLTAVL) traverse the membrane as a helical segment. At 579 to 583 (SKIQE) the chain is on the extracellular side. A helical transmembrane segment spans residues 584–604 (GGWLPLAFSSLFLCIMYTWNY). The Cytoplasmic portion of the chain corresponds to 605-877 (GSVLKYQSEM…IMRVGMTYMV (273 aa)).

Belongs to the HAK/KUP transporter (TC 2.A.72.3) family.

The protein localises to the membrane. High-affinity potassium transporter. This is Potassium transporter 23 (HAK23) from Oryza sativa subsp. japonica (Rice).